Here is a 267-residue protein sequence, read N- to C-terminus: Dihydropteroate synthase (267 aa).

Positions 1 to 251 constitute a Pterin-binding domain; sequence MTKTKIMGIL…NVELNAKLAK (251 aa). N11 contacts Mg(2+). (7,8-dihydropterin-6-yl)methyl diphosphate contacts are provided by residues T51, D84, N103, D167, K203, and 239–241; that span reads RVH.

The protein belongs to the DHPS family. As to quaternary structure, homodimer. Mg(2+) serves as cofactor.

The catalysed reaction is (7,8-dihydropterin-6-yl)methyl diphosphate + 4-aminobenzoate = 7,8-dihydropteroate + diphosphate. Its pathway is cofactor biosynthesis; tetrahydrofolate biosynthesis; 7,8-dihydrofolate from 2-amino-4-hydroxy-6-hydroxymethyl-7,8-dihydropteridine diphosphate and 4-aminobenzoate: step 1/2. Functionally, catalyzes the condensation of para-aminobenzoate (pABA) with 6-hydroxymethyl-7,8-dihydropterin diphosphate (DHPt-PP) to form 7,8-dihydropteroate (H2Pte), the immediate precursor of folate derivatives. The chain is Dihydropteroate synthase (folP) from Staphylococcus aureus (strain MRSA252).